An 89-amino-acid polypeptide reads, in one-letter code: Acylphosphatase (89 aa).

The 87-residue stretch at A3–Y89 folds into the Acylphosphatase-like domain. Catalysis depends on residues R18 and N36.

This sequence belongs to the acylphosphatase family.

It catalyses the reaction an acyl phosphate + H2O = a carboxylate + phosphate + H(+). In Archaeoglobus fulgidus (strain ATCC 49558 / DSM 4304 / JCM 9628 / NBRC 100126 / VC-16), this protein is Acylphosphatase (acyP).